The sequence spans 900 residues: MTDVTVKSLAAEIQTPVDRLVQQFADAGMTKSASDSVTQHEKETLLAHLNRDRGNAPSKLTLQRKTRSTLNVPSTGGKSKSVQIEVRKTRTYVKRDPIEAQQAEEEEQARREAEEQAQRAAEEQVKREADLRETAEKAKRAADEQAKREAAEKAKRDVAEKEKVTNQQNENMTKPAQSEKAKREAEAAELKRKAEETARLKVEEEARRIAEEARRMAEENAGRWEAESATKPEESADYHVTTSHHAREAEDENDRQVEGERRTRTRAAKVTKQKKGNRQSESKADREEARAVTRGGKGKRKPSSLQQSFNKPVQAVNRDVVIGETVTVAELANKMAVKGSQVIKTMMRLGAMATINQVIDQETAQLVAEEMGHKVILRRENELEEAVMSDRDMGVAAEFRAPVVTIMGHVDHGKTSLLDYIRSTKVAAGEAGGITQHIGAYHVETDNGMITFLDTPGHAAFTAMRARGAQATDIVVLVVAADDGVMPQTIEAIQHAKAAQVPVVVAVNKIDKPDADPDRVKTELSQYGIMPEEWGGESQFVHVSAKAGTGIDELLNAILLQAEVLELKAVRSGMANGVVIESFLDKGRGPVATVLVREGTLNKGDIVLCGFEYGRIRAMRDELGREITSAGPSIPVEILGMSGVPAAGDEATVVRDEKKAREVALYRQGKFREVKLARQQKSKLENMFANMTEGEVSELNIVLKSDVQGSCEAISDSLQKLSTDEVKVKIVGSGVGGITETDATLAAASNAIILGFNVRADASARRVVEAESLDLRYYSVIYDLIDEVKQAMSGMLAPEYKQEIIGLAEVRDVFKSPKFGAVAGCMVTEGIVKRHNKIRVLRDNVVIYEGELESLRRFKDDVNEVRNGMECGIGVKNYNDVRPGDMIEVFETIEIKRTIA.

The disordered stretch occupies residues histidine 48–asparagine 310. A compositionally biased stretch (polar residues) spans serine 68 to valine 82. Composition is skewed to basic and acidic residues over residues glutamate 85–isoleucine 98 and glutamine 108–valine 164. Residues threonine 165 to alanine 176 show a composition bias toward polar residues. Positions glutamine 177–aspartate 237 are enriched in basic and acidic residues. The segment covering threonine 263–asparagine 277 has biased composition (basic residues). Positions arginine 278–alanine 291 are enriched in basic and acidic residues. The 170-residue stretch at phenylalanine 399 to lysine 568 folds into the tr-type G domain. Residues glycine 408–threonine 415 form a G1 region. Residue glycine 408 to threonine 415 coordinates GTP. Positions glycine 433–histidine 437 are G2. Residues aspartate 454–glycine 457 are G3. Residues aspartate 454 to histidine 458 and asparagine 508 to aspartate 511 each bind GTP. The tract at residues asparagine 508–aspartate 511 is G4. The interval serine 544 to lysine 546 is G5.

This sequence belongs to the TRAFAC class translation factor GTPase superfamily. Classic translation factor GTPase family. IF-2 subfamily.

It is found in the cytoplasm. Its function is as follows. One of the essential components for the initiation of protein synthesis. Protects formylmethionyl-tRNA from spontaneous hydrolysis and promotes its binding to the 30S ribosomal subunits. Also involved in the hydrolysis of GTP during the formation of the 70S ribosomal complex. This chain is Translation initiation factor IF-2, found in Pectobacterium atrosepticum (strain SCRI 1043 / ATCC BAA-672) (Erwinia carotovora subsp. atroseptica).